The primary structure comprises 40 residues: Large ribosomal subunit protein bL36 (40 aa).

This sequence belongs to the bacterial ribosomal protein bL36 family.

The protein is Large ribosomal subunit protein bL36 of Corynebacterium diphtheriae (strain ATCC 700971 / NCTC 13129 / Biotype gravis).